A 115-amino-acid polypeptide reads, in one-letter code: Large ribosomal subunit protein bL31B (115 aa).

The protein belongs to the bacterial ribosomal protein bL31 family. Type B subfamily. Part of the 50S ribosomal subunit.

This Polynucleobacter necessarius subsp. necessarius (strain STIR1) protein is Large ribosomal subunit protein bL31B.